Reading from the N-terminus, the 406-residue chain is 5-cytosine rRNA methyltransferase NSUN4 (406 aa).

Residues Gly-207, Gly-208, Lys-209, Asp-226, Arg-231, Asp-259, Gly-260, and Asp-277 each coordinate S-adenosyl-L-methionine. The active-site Nucleophile is Cys-332.

It belongs to the class I-like SAM-binding methyltransferase superfamily. RsmB/NOP family.

The protein resides in the mitochondrion. The catalysed reaction is a cytidine in rRNA + S-adenosyl-L-methionine = a 5-methylcytidine in rRNA + S-adenosyl-L-homocysteine + H(+). The enzyme catalyses a cytidine in mRNA + S-adenosyl-L-methionine = a 5-methylcytidine in mRNA + S-adenosyl-L-homocysteine + H(+). In terms of biological role, involved in mitochondrial ribosome large subunit biogenesis. Functionally, mitochondrial RNA cytosine C(5)-methyltransferase that methylates cytosine to 5-methylcytosine (m5C) in various RNAs, such as rRNAs, mRNAs and some long non-coding RNAs (lncRNAs). Involved in mitochondrial ribosome small subunit (SSU) maturation by catalyzing methylation of mitochondrial 12S rRNA. This chain is 5-cytosine rRNA methyltransferase NSUN4 (nsun4), found in Xenopus tropicalis (Western clawed frog).